We begin with the raw amino-acid sequence, 266 residues long: Glutamate racemase (266 aa).

Substrate is bound by residues 9–10 and 41–42; these read DS and YG. The active-site Proton donor/acceptor is Cys-72. Residue 73 to 74 participates in substrate binding; sequence NT. Cys-184 acts as the Proton donor/acceptor in catalysis. 185–186 contributes to the substrate binding site; it reads TH.

Belongs to the aspartate/glutamate racemases family.

The catalysed reaction is L-glutamate = D-glutamate. It functions in the pathway cell wall biogenesis; peptidoglycan biosynthesis. In terms of biological role, provides the (R)-glutamate required for cell wall biosynthesis. In Staphylococcus aureus (strain Mu3 / ATCC 700698), this protein is Glutamate racemase.